We begin with the raw amino-acid sequence, 142 residues long: Large ribosomal subunit protein uL13 (142 aa).

It belongs to the universal ribosomal protein uL13 family. In terms of assembly, part of the 50S ribosomal subunit.

This protein is one of the early assembly proteins of the 50S ribosomal subunit, although it is not seen to bind rRNA by itself. It is important during the early stages of 50S assembly. In Photorhabdus laumondii subsp. laumondii (strain DSM 15139 / CIP 105565 / TT01) (Photorhabdus luminescens subsp. laumondii), this protein is Large ribosomal subunit protein uL13.